Consider the following 422-residue polypeptide: MNIEKVIAREVLDSRGNPTVEAEVHLDSGFSGRAIVPSGASTGSHEALELRDGGERYMGKGVERAVQNVREALGPALIGMDASEQAAIDKALMDVDGTSNKGNMGGNAILAVSLATARAAAAELDIPLYRYLGGSNAKTLPVPMMNVINGGAHADNSVDFQEFMVMPVGAPSFREALRYGAETFHHLKKVLSGRGYNTNVGDEGGFAPDLKSNEEALEVLLEAIQQAGYEPGKDICIALDPAVTELYKDGQYHLESEGRVLSSDEMIDFWADWTSRYPIVSIEDGLAEDDWDGWERLTAKVGAKTQLVGDDLFVTNPERLQQGIDRKVGNAILVKVNQIGSLTESMDAIELAKRHHYGTIISHRSGESEDAFIADLAVATNAGQIKTGSASRSDRIAKYNQLLRIEDQLGDRAVFPGRKALR.

Residue glutamine 161 participates in (2R)-2-phosphoglycerate binding. Glutamate 203 functions as the Proton donor in the catalytic mechanism. Residues aspartate 240, glutamate 283, and aspartate 310 each coordinate Mg(2+). Lysine 335, arginine 364, serine 365, and lysine 386 together coordinate (2R)-2-phosphoglycerate. Residue lysine 335 is the Proton acceptor of the active site.

Belongs to the enolase family. The cofactor is Mg(2+).

It localises to the cytoplasm. It is found in the secreted. Its subcellular location is the cell surface. The enzyme catalyses (2R)-2-phosphoglycerate = phosphoenolpyruvate + H2O. The protein operates within carbohydrate degradation; glycolysis; pyruvate from D-glyceraldehyde 3-phosphate: step 4/5. Catalyzes the reversible conversion of 2-phosphoglycerate (2-PG) into phosphoenolpyruvate (PEP). It is essential for the degradation of carbohydrates via glycolysis. The sequence is that of Enolase from Deinococcus radiodurans (strain ATCC 13939 / DSM 20539 / JCM 16871 / CCUG 27074 / LMG 4051 / NBRC 15346 / NCIMB 9279 / VKM B-1422 / R1).